The chain runs to 433 residues: UDP-N-acetylmuramate--L-alanine ligase (433 aa).

108-114 (GAHGKTS) is an ATP binding site.

Belongs to the MurCDEF family.

It is found in the cytoplasm. It catalyses the reaction UDP-N-acetyl-alpha-D-muramate + L-alanine + ATP = UDP-N-acetyl-alpha-D-muramoyl-L-alanine + ADP + phosphate + H(+). Its pathway is cell wall biogenesis; peptidoglycan biosynthesis. Its function is as follows. Cell wall formation. This chain is UDP-N-acetylmuramate--L-alanine ligase, found in Anoxybacillus flavithermus (strain DSM 21510 / WK1).